A 206-amino-acid chain; its full sequence is Thymidylate kinase (206 aa).

ATP is bound at residue 10-17 (GIDGAGKS).

The protein belongs to the thymidylate kinase family.

It catalyses the reaction dTMP + ATP = dTDP + ADP. In terms of biological role, phosphorylation of dTMP to form dTDP in both de novo and salvage pathways of dTTP synthesis. This is Thymidylate kinase from Neisseria gonorrhoeae (strain ATCC 700825 / FA 1090).